The primary structure comprises 300 residues: TLR adapter interacting with SLC15A4 on the lysosome (300 aa).

Residues 289–293 (SLHIS) carry the pLxIS motif motif. Ser-293 is subject to Phosphoserine.

Interacts (via pLxIS motif) with IRF5; leading to IRF5 activation. Interacts with SLC15A4; leading to its recruitment to endolysosome. The phosphorylated pLxIS motif constitutes an IRF5-binding motif, leading to recruitment of the transcription factor IRF5 to induce type-I interferons and other cytokines.

It localises to the lysosome membrane. The protein localises to the endosome membrane. It is found in the nucleus. The protein resides in the cytoplasm. In terms of biological role, innate immune adapter that mediates the recruitment and activation of IRF5 downstream of endolysosomal toll-like receptors TLR7, TLR8 and TLR9. Following recruitment to endolysosome by SLC15A4 downstream of TLR7, TLR8 and TLR9, specifically recruits IRF5 transcription factor via its pLxIS motif, leading to IRF5 activation and subsequent expression of type I interferons. Plays a role in the regulation of endolysosomal pH in immune cells such as B-cells, dendritic cells and monocytes. The sequence is that of TLR adapter interacting with SLC15A4 on the lysosome from Bos taurus (Bovine).